The chain runs to 101 residues: Movement protein (101 aa).

The chain crosses the membrane as a helical span at residues 30-50; it reads EVAILSFVALICIYLLYLWVL. Residues 80–101 form a disordered region; that stretch reads PIPNTLEPTAPVHPGPFVPGQG. Residues 90–101 show a composition bias toward pro residues; sequence PVHPGPFVPGQG.

Belongs to the mastrevirus movement protein family. As to quaternary structure, interacts with the capsid protein (CP). Part of a MP-CP-viral DNA complex.

Its subcellular location is the host membrane. In terms of biological role, involved in the viral transport within, and between cells. In Avena sativa (Oat), this protein is Movement protein.